The following is a 167-amino-acid chain: Kininogen-1 (167 aa).

Positions 1–23 are cleaved as a signal peptide; the sequence is MRLWFCLSFFIILCLEHFPGTLA.

The protein belongs to the bradykinin-related peptide family. As to expression, expressed by the skin glands.

It localises to the secreted. Its function is as follows. Vasodilator. Bradykinin produces in vitro relaxation of rat arterial smooth muscle and constriction of intestinal smooth muscle. May target bradykinin receptors (BDKRB). In Bombina orientalis (Oriental fire-bellied toad), this protein is Kininogen-1.